The sequence spans 303 residues: Methionyl-tRNA formyltransferase (303 aa).

111 to 114 provides a ligand contact to (6S)-5,6,7,8-tetrahydrofolate; it reads SLLP.

This sequence belongs to the Fmt family.

It catalyses the reaction L-methionyl-tRNA(fMet) + (6R)-10-formyltetrahydrofolate = N-formyl-L-methionyl-tRNA(fMet) + (6S)-5,6,7,8-tetrahydrofolate + H(+). Its function is as follows. Attaches a formyl group to the free amino group of methionyl-tRNA(fMet). The formyl group appears to play a dual role in the initiator identity of N-formylmethionyl-tRNA by promoting its recognition by IF2 and preventing the misappropriation of this tRNA by the elongation apparatus. The sequence is that of Methionyl-tRNA formyltransferase from Ehrlichia canis (strain Jake).